The chain runs to 148 residues: Macrodomain Ter protein (148 aa).

This sequence belongs to the MatP family. As to quaternary structure, homodimer.

It localises to the cytoplasm. Its function is as follows. Required for spatial organization of the terminus region of the chromosome (Ter macrodomain) during the cell cycle. Prevents early segregation of duplicated Ter macrodomains during cell division. Binds specifically to matS, which is a 13 bp signature motif repeated within the Ter macrodomain. The chain is Macrodomain Ter protein from Photobacterium profundum (strain SS9).